The sequence spans 185 residues: Nodulin-20 (185 aa).

Residues 1-17 form the signal peptide; it reads MRVVLITLFLFIGAAVA.

The protein belongs to the nodulin 20 family.

It is found in the symbiosome. Its subcellular location is the peribacteroid membrane. It localises to the peribacteroid space. This chain is Nodulin-20, found in Glycine max (Soybean).